A 1158-amino-acid chain; its full sequence is MKLKELEKPAVQAWSPARQYPVYLATGTSAQQLDASFSTNATLEIFEIDFRDPSLDLKHKGILSVSSRFHKLIWGSFGSGLLENSGVIAGGGDNGTLTLYNVTHVLSSGKEPLIAQKQKHTGAVRALDFNPFQGNLLASGASDSEIFIWDLNHLSVPMTPGPKSQNPPEDIKALSWNLQVQHILASAHPSGKAVVWDLRKNEPIIKVSSHSSRMNCSGLAWNPDIATQLVLCSEDDQLPVIQLWDLRFASSPLKVLESHSRGILSMSWNQADAELLLSTAKDSQIFCWNLSSSEVVYKLPTQSSWCFDVQWCPQSPPVFSAVSFDGWISLCSVMGRSWEAQHMRQADKVPEQVAQASLIPPLKKPPKWMRRPAGGSFAFGGKLVTFGLPSIPVQPVAQACSRPVFISQVITESEVLTRSVVLQEALGSGNLLNYCQSKVQQASLPCEKILWQFLKVTLEQDSRPKFLGLLGYSREELQKKVDTCLKSDSKSQESPQLEAVDLKSDRAHSPCAQASKHTAKEASESSAFFDELIPQNMTPWEIPTTEDTDGLLSQALLLGELRSAVELCLKEERFADAIILAQAGDAELLKWTQERYLAKRRTKTSSLLACVVKKNWKDLVCACRLKNWREALALLLTYSGPEKFPELCDMLGTRMEQEGGRALTSEARLCYVCSGSVERLVESWAKFQQASSPMALQELMEQVTVLSRSLELLQGSNKMSPGPATTHRLTQYANLLAAQGSLATAMSFLPSDCIQPGVQQLRDRLFHAQGSAVLGQQAPAFPFPRVAVGAALHSKETSSYRRGLQPPQQVPAPSVRPRTTAQPSSVMPFSPSQPSPSQGSSDHRVLRPQAILPGHFVPGVRPALSPPQLSGGQSVPAVNPAGFCGAWPLPGPTPVMASPDFMQPGSTHLPETPRLLPLPPVGPPGPNPLSSQLPASPVTFSVAPPPGGPRAPCSSALPSSGILATCPGPQDSWKVSPASQGNLQRKKLPETFMPPAPITAPLRSLGPEPQQALLPQPLVSSATLPPPGAPRECSLQQLQPLPPERTEKELPPEHQCVKDSFEALLQRCSLTATDLKTKRKLEEAARRLECLYEKLCEGTLSPHVLAGLHEVARCVDAGSFEQGLAVHAQVAGCSSFSEVSSFMPMLKAVLTIAHKLQG.

7 WD repeats span residues 4 to 47 (KELE…EIFE), 65 to 110 (VSSR…SSGK), 119 to 159 (KHTG…VPMT), 166 to 206 (NPPE…PIIK), 209 to 254 (SHSS…SPLK), 258 to 298 (SHSR…VVYK), and 301 to 341 (TQSS…WEAQ). The stretch at 376 to 407 (SFAFGGKLVTFGLPSIPVQPVAQACSRPVFIS) is one WD 8; interaction with SEC13 repeat. Disordered stretches follow at residues 485–520 (LKSD…HTAK), 797–843 (TSSY…SSDH), and 968–1010 (GPQD…PEPQ). Residues 822–840 (QPSSVMPFSPSQPSPSQGS) are compositionally biased toward low complexity.

It belongs to the WD repeat SEC31 family. COPII is composed of at least 5 proteins: the SEC23/24 complex, the SEC13/31 complex and SAR1. SEC13 and SEC31 make a 2:2 tetramer that forms the edge element of the COPII outer coat. The tetramer self-assembles in multiple copies to form the complete polyhedral cage. Interacts (via WD 8) with SEC13. Interacts with SEC31A. Post-translationally, monoubiquitinated by the BCR(KLHL12) E3 ubiquitin ligase complex, leading to regulate the size of COPII coats.

It localises to the cytoplasm. It is found in the cytoplasmic vesicle. The protein resides in the COPII-coated vesicle membrane. Its subcellular location is the endoplasmic reticulum membrane. In terms of biological role, as a component of the coat protein complex II (COPII), may function in vesicle budding and cargo export from the endoplasmic reticulum. This Mus musculus (Mouse) protein is Protein transport protein Sec31B (Sec31b).